A 238-amino-acid chain; its full sequence is Ribonuclease PH (238 aa).

Phosphate-binding positions include Arg-86 and 124–126 (GTR).

The protein belongs to the RNase PH family. In terms of assembly, homohexameric ring arranged as a trimer of dimers.

The enzyme catalyses tRNA(n+1) + phosphate = tRNA(n) + a ribonucleoside 5'-diphosphate. Its function is as follows. Phosphorolytic 3'-5' exoribonuclease that plays an important role in tRNA 3'-end maturation. Removes nucleotide residues following the 3'-CCA terminus of tRNAs; can also add nucleotides to the ends of RNA molecules by using nucleoside diphosphates as substrates, but this may not be physiologically important. Probably plays a role in initiation of 16S rRNA degradation (leading to ribosome degradation) during starvation. The sequence is that of Ribonuclease PH from Anaeromyxobacter sp. (strain Fw109-5).